A 508-amino-acid chain; its full sequence is Lysine--tRNA ligase (508 aa).

2 residues coordinate Mg(2+): E418 and E425.

It belongs to the class-II aminoacyl-tRNA synthetase family. In terms of assembly, homodimer. Requires Mg(2+) as cofactor.

The protein localises to the cytoplasm. It carries out the reaction tRNA(Lys) + L-lysine + ATP = L-lysyl-tRNA(Lys) + AMP + diphosphate. The polypeptide is Lysine--tRNA ligase (Burkholderia cenocepacia (strain HI2424)).